The following is a 623-amino-acid chain: Glutathione import ATP-binding protein GsiA (623 aa).

ABC transporter domains lie at 15-269 (VENL…RALL) and 314-564 (LRVR…RKLL). ATP is bound by residues 49 to 56 (GESGSGKS) and 357 to 364 (GESGSGKS).

It belongs to the ABC transporter superfamily. Glutathione importer (TC 3.A.1.5.11) family. In terms of assembly, the complex is composed of two ATP-binding proteins (GsiA), two transmembrane proteins (GsiC and GsiD) and a solute-binding protein (GsiB).

The protein localises to the cell inner membrane. It carries out the reaction glutathione(out) + ATP + H2O = glutathione(in) + ADP + phosphate + H(+). Part of the ABC transporter complex GsiABCD involved in glutathione import. Responsible for energy coupling to the transport system. The polypeptide is Glutathione import ATP-binding protein GsiA (Escherichia coli O157:H7).